The chain runs to 663 residues: Transforming growth factor beta activator LRRC32 (663 aa).

Positions 1–17 (MSHQILLLLAMLTLGLA) are cleaved as a signal peptide. Residues 18–628 (ISQRREQVPC…CEKGGLKNVN (611 aa)) are Extracellular-facing. The LRRNT domain occupies 22-49 (REQVPCRTVNKEALCHGLGLLQVPSVLS). 10 LRR repeats span residues 49–72 (SLDIQALYLSGNQLQSILVSPLGF), 73–96 (YTALRHLDLSDNQISFLQAGVFQA), 98–123 (PYLEHLNLAHNRLATGMALNSGGLGR), 125–148 (PLLVSLDLSGNSLHGNLVERLLGE), 149–172 (TPRLRTLSLAENSLTRLARHTFWG), 174–196 (PAVEQLDLHSNVLMDIEDGAFEA), 197–220 (LPHLTHLNLSRNSLTCISDFSLQQ), 222–241 (QVLDLSCNSIEAFQTAPEPQ), 243–267 (QFQLAWLDLRENKLLHFPDLAVFPR), and 269–287 (IYLNVSNNLIQLPAGLPRG). An N-linked (GlcNAc...) asparagine glycan is attached at Asn204. N-linked (GlcNAc...) asparagine glycosylation is found at Asn272, Asn305, and Asn309. A disordered region spans residues 291 to 311 (LHAPSEGWSASPLSNPSRNAS). The segment covering 301 to 311 (SPLSNPSRNAS) has biased composition (polar residues). LRR repeat units follow at residues 315 to 338 (LSQLLNLDLSYNEIELVPASFLEH), 340 to 362 (TSLRFLNLSRNCLRSFEARQVDS), 363 to 386 (LPCLVLLDLSHNVLEALELGTKVL), 387 to 409 (GSLQTLLLQDNALQELPPYTFAS), 411 to 433 (ASLQRLNLQGNQVSPCGGPAEPG), 443 to 466 (IPTLHVLNMAGNSMGMLRAGSFLH), 468 to 489 (PLTELDLSTNPGLDVATGALVG), 491 to 514 (EASLEVLELQGNGLTVLRVDLPCF), 515 to 539 (LRLKRLNLAENQLSHLPAWTRAVSL), 541 to 559 (VLDLRNNSFSLLPGNAMGG), and 561 to 584 (ETSLRRLYLQGNPLSCCGNGWLAA). A glycan (N-linked (GlcNAc...) asparagine) is linked at Asn346. Asn546 carries N-linked (GlcNAc...) asparagine glycosylation. An LRRCT domain is found at 572–621 (NPLSCCGNGWLAAQLHQGRVDVDATQDLICRFGSQEELSLSLVRPEDCEK). Residues 629–649 (LILLLSFTLVSAIVLTTLATI) form a helical membrane-spanning segment. Residues 650-663 (CFLRRQKLSQQYKA) are Cytoplasmic-facing.

The protein belongs to the LRRC32/LRRC33 family. In terms of assembly, interacts with TGFB1; associates via disulfide bonds with the Latency-associated peptide chain (LAP) regulatory chain of TGFB1, leading to regulate activation of TGF-beta-1. Interacts with TGFB2. Interacts with TGFB3; associates via disulfide bonds with the Latency-associated peptide chain (LAP) regulatory chain of TGFB3, leading to regulate activation of TGF-beta-3. Interacts with LAPTM4B; decreases TGFB1 production in regulatory T-cells. As to expression, present in medial edge epithelial cells at 14.5 dpc (at protein level).

The protein localises to the cell membrane. The protein resides in the cell surface. Key regulator of transforming growth factor beta (TGFB1, TGFB2 and TGFB3) that controls TGF-beta activation by maintaining it in a latent state during storage in extracellular space. Associates specifically via disulfide bonds with the Latency-associated peptide (LAP), which is the regulatory chain of TGF-beta, and regulates integrin-dependent activation of TGF-beta. Able to outcompete LTBP1 for binding to LAP regulatory chain of TGF-beta. Controls activation of TGF-beta-1 (TGFB1) on the surface of activated regulatory T-cells (Tregs). Required for epithelial fusion during palate development by regulating activation of TGF-beta-3 (TGFB3). The chain is Transforming growth factor beta activator LRRC32 from Mus musculus (Mouse).